The chain runs to 327 residues: tRNA N6-adenosine threonylcarbamoyltransferase (327 aa).

Residues histidine 107 and histidine 111 each coordinate Fe cation. Residues 129–133 (LVSGG), aspartate 162, glycine 175, and asparagine 263 contribute to the substrate site. A Fe cation-binding site is contributed by aspartate 291.

This sequence belongs to the KAE1 / TsaD family. Fe(2+) serves as cofactor.

It localises to the cytoplasm. It carries out the reaction L-threonylcarbamoyladenylate + adenosine(37) in tRNA = N(6)-L-threonylcarbamoyladenosine(37) in tRNA + AMP + H(+). Functionally, required for the formation of a threonylcarbamoyl group on adenosine at position 37 (t(6)A37) in tRNAs that read codons beginning with adenine. Is involved in the transfer of the threonylcarbamoyl moiety of threonylcarbamoyl-AMP (TC-AMP) to the N6 group of A37, together with TsaE and TsaB. TsaD likely plays a direct catalytic role in this reaction. This is tRNA N6-adenosine threonylcarbamoyltransferase from Nautilia profundicola (strain ATCC BAA-1463 / DSM 18972 / AmH).